We begin with the raw amino-acid sequence, 199 residues long: Zinc finger matrin-type protein 2 (199 aa).

Residue A2 is modified to N-acetylalanine. Residues K8, K36, K39, K45, K55, K61, K64, K70, K102, and K123 each participate in a glycyl lysine isopeptide (Lys-Gly) (interchain with G-Cter in SUMO2) cross-link. The disordered stretch occupies residues 27-46 (KRLTEEREKKDGKPVQPVKR). The segment at 80 to 104 (YYCNVCDCVVKDSINFLDHINGKKH) adopts a Matrin-type zinc-finger fold. The span at 150-173 (REEEEKAKAYKKEKQKEKKRRAEE) shows a compositional bias: basic and acidic residues. Residues 150 to 175 (REEEEKAKAYKKEKQKEKKRRAEEDL) are disordered.

As to quaternary structure, component of the spliceosome B complex.

The protein localises to the nucleus. In terms of biological role, involved in pre-mRNA splicing as a component of the spliceosome. This Homo sapiens (Human) protein is Zinc finger matrin-type protein 2 (ZMAT2).